A 602-amino-acid polypeptide reads, in one-letter code: Aspartate--tRNA(Asp/Asn) ligase (602 aa).

E175 serves as a coordination point for L-aspartate. Residues 199 to 202 are aspartate; sequence QIFK. L-aspartate is bound at residue R221. ATP contacts are provided by residues 221–223 and Q230; that span reads RDE. H458 contacts L-aspartate. E492 contributes to the ATP binding site. An L-aspartate-binding site is contributed by R499. An ATP-binding site is contributed by 544–547; sequence GLDR.

This sequence belongs to the class-II aminoacyl-tRNA synthetase family. Type 1 subfamily. As to quaternary structure, homodimer.

The protein resides in the cytoplasm. It catalyses the reaction tRNA(Asx) + L-aspartate + ATP = L-aspartyl-tRNA(Asx) + AMP + diphosphate. Functionally, aspartyl-tRNA synthetase with relaxed tRNA specificity since it is able to aspartylate not only its cognate tRNA(Asp) but also tRNA(Asn). Reaction proceeds in two steps: L-aspartate is first activated by ATP to form Asp-AMP and then transferred to the acceptor end of tRNA(Asp/Asn). This is Aspartate--tRNA(Asp/Asn) ligase from Cupriavidus necator (strain ATCC 17699 / DSM 428 / KCTC 22496 / NCIMB 10442 / H16 / Stanier 337) (Ralstonia eutropha).